The sequence spans 212 residues: Leucyl/phenylalanyl-tRNA--protein transferase (212 aa).

The protein belongs to the L/F-transferase family.

The protein resides in the cytoplasm. It catalyses the reaction N-terminal L-lysyl-[protein] + L-leucyl-tRNA(Leu) = N-terminal L-leucyl-L-lysyl-[protein] + tRNA(Leu) + H(+). The catalysed reaction is N-terminal L-arginyl-[protein] + L-leucyl-tRNA(Leu) = N-terminal L-leucyl-L-arginyl-[protein] + tRNA(Leu) + H(+). It carries out the reaction L-phenylalanyl-tRNA(Phe) + an N-terminal L-alpha-aminoacyl-[protein] = an N-terminal L-phenylalanyl-L-alpha-aminoacyl-[protein] + tRNA(Phe). Functionally, functions in the N-end rule pathway of protein degradation where it conjugates Leu, Phe and, less efficiently, Met from aminoacyl-tRNAs to the N-termini of proteins containing an N-terminal arginine or lysine. This is Leucyl/phenylalanyl-tRNA--protein transferase from Jannaschia sp. (strain CCS1).